The following is a 168-amino-acid chain: RxLR effector protein PITG_12737 (168 aa).

The signal sequence occupies residues 1–20 (MRACAILVVAAAAVLTGSTA). Residues 54 to 77 (RRLRKHKTVNTNSEMEYESEAEAR) carry the RxLR-dEER motif.

It belongs to the RxLR effector family.

It localises to the secreted. Its subcellular location is the host nucleus. It is found in the host cytoplasm. Its function is as follows. Effector that enhances P.infestans colonization of Nicotiana benthamiana leaves. The sequence is that of RxLR effector protein PITG_12737 from Phytophthora infestans (strain T30-4) (Potato late blight agent).